We begin with the raw amino-acid sequence, 308 residues long: U-box domain-containing protein 54 (308 aa).

The tract at residues 172–235 (FSEFSTSAEK…NESDEDPRLE (64 aa)) is disordered. Residues 210–227 (ESPKKGRKETIEKSKSNE) are compositionally biased toward basic and acidic residues. The region spanning 232 to 306 (PRLEDFKCPI…KDWLEKNPNY (75 aa)) is the U-box domain.

The enzyme catalyses S-ubiquitinyl-[E2 ubiquitin-conjugating enzyme]-L-cysteine + [acceptor protein]-L-lysine = [E2 ubiquitin-conjugating enzyme]-L-cysteine + N(6)-ubiquitinyl-[acceptor protein]-L-lysine.. Its pathway is protein modification; protein ubiquitination. Functions as an E3 ubiquitin ligase. The chain is U-box domain-containing protein 54 (PUB54) from Arabidopsis thaliana (Mouse-ear cress).